Consider the following 131-residue polypeptide: RxLR effector protein 62 (131 aa).

The signal sequence occupies residues 1-19 (MRLDILLFTLSSSTSLALS). Residues 49-60 (RHLREEPANEAR) carry the RxLR-dEER motif. Asparagine 61 is a glycosylation site (N-linked (GlcNAc...) asparagine).

It belongs to the RxLR effector family.

It is found in the secreted. Its subcellular location is the host cell. In terms of biological role, secreted effector that suppresses callose deposition, a hallmark of pathogen-associated molecular pattern (PAMP)-triggered immunity (PTI) and renders host plants more susceptible to bacterial infection. Reduces host plant responsiveness to salicylic acid (SA) in haustoriated cells into which host-translocated effectors are delivered. This Hyaloperonospora arabidopsidis (strain Emoy2) (Downy mildew agent) protein is RxLR effector protein 62.